The primary structure comprises 51 residues: MASHKTFRIKRFLAKKQKQNRPIPQWIRMKTGNKIRYNSKRRHWRRTKLGL.

This sequence belongs to the eukaryotic ribosomal protein eL39 family. Interacts with impact.

The chain is Large ribosomal subunit protein eL39 (rpl39) from Ictalurus punctatus (Channel catfish).